Reading from the N-terminus, the 270-residue chain is MTHLLGVVGDPVAHSLSPFIHNGWLRAHQIDAVYSAFEVKAGELVSGLQSLSSQGVIGLNVTLPHKEEAMRLATSVSGTAHRLGAVNFLVRREDGWIGDNTDAPGFGLTLDFGDIEVSGRNVFLLGAGGSARAVASVLADRGARLTICNRTVGRAEDLARDLAPGARVRSLDEGLRKLSSAALVVNTLSLGHSGGRLELPPSAGGIFYDISYGKGAEAALKEAREKGWRALDGLGMLVAQAAISFEHWFGIKPDMAEAHARCRKLVEATS.

Residues 15-17 (SLS) and Thr-62 contribute to the shikimate site. The active-site Proton acceptor is the Lys-66. Shikimate contacts are provided by Asn-87 and Asp-102. NADP(+) contacts are provided by residues 126-130 (GAGGS), 149-154 (NRTVGR), and Ile-210. Tyr-212 lines the shikimate pocket. Position 233 (Gly-233) interacts with NADP(+).

This sequence belongs to the shikimate dehydrogenase family. As to quaternary structure, homodimer.

It carries out the reaction shikimate + NADP(+) = 3-dehydroshikimate + NADPH + H(+). It participates in metabolic intermediate biosynthesis; chorismate biosynthesis; chorismate from D-erythrose 4-phosphate and phosphoenolpyruvate: step 4/7. Functionally, involved in the biosynthesis of the chorismate, which leads to the biosynthesis of aromatic amino acids. Catalyzes the reversible NADPH linked reduction of 3-dehydroshikimate (DHSA) to yield shikimate (SA). The polypeptide is Shikimate dehydrogenase (NADP(+)) (Hyphomonas neptunium (strain ATCC 15444)).